The primary structure comprises 241 residues: Phosducin-like protein 2 (241 aa).

Residues 34 to 202 (VLRLQKEAMV…EWKLAEVGAI (169 aa)) enclose the Phosducin domain. The segment at 89-241 (FGELREISGN…DSSNSDNDTK (153 aa)) is thioredoxin fold.

It belongs to the phosducin family. As to quaternary structure, interacts with the CCT chaperonin complex and actin. Testis-specific.

It is found in the endoplasmic reticulum. Its function is as follows. Essential for male fertility, spermiogenesis and acrosome formation. This is Phosducin-like protein 2 (PDCL2) from Homo sapiens (Human).